Here is an 845-residue protein sequence, read N- to C-terminus: P protein (845 aa).

Residues 1 to 57 (MRLENREGRPTSGVLEMELPQASAPSRAGLGSLGLVGLDSSNHRPQQGGSKAGSRGP) are disordered. The Extracellular portion of the chain corresponds to 1–183 (MRLENREGRP…HLSKLRCCVQ (183 aa)). The segment covering 26–40 (SRAGLGSLGLVGLDS) has biased composition (low complexity). Residues 184-204 (WLKVSGLFVFVVLCSILFSLY) traverse the membrane as a helical segment. The Cytoplasmic segment spans residues 205-337 (PDQGKFWQLL…QYLRASIEAQ (133 aa)). The helical transmembrane segment at 338 to 358 (VTIAAVILAGVYVLIIFEIVH) threads the bilayer. At 359 to 360 (RT) the chain is on the extracellular side. Residues 361–381 (LAAMLGSLAALAALAVIGDRP) form a helical membrane-spanning segment. Residues 382-393 (TLTQVVEWIDFE) are Cytoplasmic-facing. Residues 394–414 (TLALLFGMMILVAIFSETGFF) traverse the membrane as a helical segment. Residues 415–429 (DYCAVKAYQLSRGRV) are Extracellular-facing. The helical transmembrane segment at 430-450 (WAMIIMLCLIAAVLSAFLDNV) threads the bilayer. The Cytoplasmic segment spans residues 451 to 513 (TTALLFTPVT…ELRKMGLDFA (63 aa)). Residues 514–534 (GFTAHMFAGICFVLLFSFPLL) traverse the membrane as a helical segment. Topologically, residues 535–629 (RLLYWNRKLY…KKHRISDRTL (95 aa)) are extracellular. Residues 630–650 (LTKCVTVLGLVIFMFFLNSFV) traverse the membrane as a helical segment. Residue P651 is a topological domain, cytoplasmic. The helical transmembrane segment at 652-672 (GVHLDLGWIAILGAIWLLILA) threads the bilayer. Over 673–687 (DIHDFEIILHRVEWA) the chain is Extracellular. A helical membrane pass occupies residues 688-708 (TLLFFAALFILMEALAHLHLI). Residues 709–730 (EYVGEQTALLIKMVPEDQRLAA) are Cytoplasmic-facing. Residues 731–751 (AIIVVVWVSAIASSLIDNIPF) traverse the membrane as a helical segment. Residues 752–773 (TATMIPVLLNLSRDPEISLPAP) lie on the Extracellular side of the membrane. Residues 774-794 (PLMYALALGACLGGNGTLIGA) form a helical membrane-spanning segment. At 795–820 (SANVVCAGIAEQHGYGFSFMEFFRLG) the chain is on the cytoplasmic side. A helical membrane pass occupies residues 821 to 841 (FPMMVVSCMVGMCYLLVAHVV). Residues 842-845 (MGWN) lie on the Extracellular side of the membrane.

Belongs to the CitM (TC 2.A.11) transporter family.

The protein localises to the melanosome membrane. It carries out the reaction chloride(in) = chloride(out). Functionally, contributes to a melanosome-specific anion (chloride) current that modulates melanosomal pH for optimal tyrosinase activity required for melanogenesis and the melanosome maturation. One of the components of the mammalian pigmentary system. May serve as a key control point at which ethnic skin color variation is determined. Major determinant of brown and/or blue eye color. Seems to regulate the post-translational processing of tyrosinase, which catalyzes the limiting reaction in melanin synthesis. This Sus scrofa (Pig) protein is P protein (Oca2).